We begin with the raw amino-acid sequence, 66 residues long: DNA gyrase inhibitor YacG (66 aa).

The Zn(2+) site is built by Cys10, Cys13, Cys29, and Cys33.

The protein belongs to the DNA gyrase inhibitor YacG family. Interacts with GyrB. Zn(2+) serves as cofactor.

Inhibits all the catalytic activities of DNA gyrase by preventing its interaction with DNA. Acts by binding directly to the C-terminal domain of GyrB, which probably disrupts DNA binding by the gyrase. This chain is DNA gyrase inhibitor YacG, found in Edwardsiella ictaluri (strain 93-146).